An 87-amino-acid chain; its full sequence is UPF0473 protein PTH_1066 (87 aa).

This sequence belongs to the UPF0473 family.

The protein is UPF0473 protein PTH_1066 of Pelotomaculum thermopropionicum (strain DSM 13744 / JCM 10971 / SI).